Consider the following 205-residue polypeptide: Probable thymidylate kinase (205 aa).

Residue 10–17 coordinates ATP; the sequence is GIDGSGKS.

It belongs to the thymidylate kinase family.

It carries out the reaction dTMP + ATP = dTDP + ADP. The sequence is that of Probable thymidylate kinase from Methanosarcina barkeri (strain Fusaro / DSM 804).